We begin with the raw amino-acid sequence, 767 residues long: RNA cytosine C(5)-methyltransferase NSUN2 (767 aa).

Residues 1–36 (MGRRSRGRRLQQQQRPEDAEDGAEGGGKRGEAGWEG) form a disordered region. A Glycyl lysine isopeptide (Lys-Gly) (interchain with G-Cter in SUMO2) cross-link involves residue lysine 46. Serine 139 carries the phosphoserine; by AURKB modification. Residues 184–190 (CAAPGSK), aspartate 215, aspartate 242, and aspartate 268 each bind S-adenosyl-L-methionine. The active-site Nucleophile is cysteine 321. Residues 436–481 (NKRQPKLQGKSAETRESTQLSPADLTEGKPTDPSKLESPSFTGTGD) form a disordered region. Serine 456 is modified (phosphoserine). The segment covering 461-470 (TEGKPTDPSK) has biased composition (basic and acidic residues). Residues lysine 464 and lysine 470 each participate in a glycyl lysine isopeptide (Lys-Gly) (interchain with G-Cter in SUMO2) cross-link. Serine 473 is subject to Phosphoserine. Residues lysine 511 and lysine 516 each participate in a glycyl lysine isopeptide (Lys-Gly) (interchain with G-Cter in SUMO2) cross-link. Lysine 586 carries the N6-acetyllysine; alternate modification. The residue at position 586 (lysine 586) is an N6-malonyllysine; alternate. Lysine 586 participates in a covalent cross-link: Glycyl lysine isopeptide (Lys-Gly) (interchain with G-Cter in SUMO2); alternate. Serine 593 is modified (phosphoserine). Residues lysine 640, lysine 654, and lysine 660 each participate in a glycyl lysine isopeptide (Lys-Gly) (interchain with G-Cter in SUMO2) cross-link. The residue at position 718 (threonine 718) is a Phosphothreonine. Residues 719–730 (NESAASTGQPDN) are compositionally biased toward polar residues. The interval 719–767 (NESAASTGQPDNDVTEGQRAGEPNSPDAEEANSPDVTAGCDPAGVHPPR) is disordered. A phosphoserine mark is found at serine 724, serine 743, and serine 751.

The protein belongs to the class I-like SAM-binding methyltransferase superfamily. RsmB/NOP family. TRM4 subfamily. As to quaternary structure, interacts with NPM1 and NCL during interphase; interaction is disrupted following phosphorylation at Ser-139. In terms of processing, phosphorylated at Ser-139 by AURKB during mitosis, leading to abolish methyltransferase activity and the interaction with NPM1. Expressed in adult and fetal brain and in lymphoblastoid cells.

Its subcellular location is the nucleus. The protein localises to the nucleolus. It is found in the cytoplasm. It localises to the mitochondrion. The protein resides in the cytoskeleton. Its subcellular location is the spindle. The protein localises to the secreted. It is found in the extracellular exosome. It catalyses the reaction cytidine(48) in tRNA + S-adenosyl-L-methionine = 5-methylcytidine(48) in tRNA + S-adenosyl-L-homocysteine + H(+). The enzyme catalyses cytidine(49) in tRNA + S-adenosyl-L-methionine = 5-methylcytidine(49) in tRNA + S-adenosyl-L-homocysteine + H(+). It carries out the reaction cytidine(50) in tRNA + S-adenosyl-L-methionine = 5-methylcytidine(50) in tRNA + S-adenosyl-L-homocysteine + H(+). The catalysed reaction is cytidine(34) in tRNA precursor + S-adenosyl-L-methionine = 5-methylcytidine(34) in tRNA precursor + S-adenosyl-L-homocysteine + H(+). It catalyses the reaction a cytidine in mRNA + S-adenosyl-L-methionine = a 5-methylcytidine in mRNA + S-adenosyl-L-homocysteine + H(+). Inhibited by magnesium ions. Functionally, RNA cytosine C(5)-methyltransferase that methylates cytosine to 5-methylcytosine (m5C) in various RNAs, such as tRNAs, mRNAs and some long non-coding RNAs (lncRNAs). Involved in various processes, such as epidermal stem cell differentiation, testis differentiation and maternal to zygotic transition during early development: acts by increasing protein synthesis; cytosine C(5)-methylation promoting tRNA stability and preventing mRNA decay. Methylates cytosine to 5-methylcytosine (m5C) at positions 34 and 48 of intron-containing tRNA(Leu)(CAA) precursors, and at positions 48, 49 and 50 of tRNA(Gly)(GCC) precursors. tRNA methylation is required generation of RNA fragments derived from tRNAs (tRFs). Also mediates C(5)-methylation of mitochondrial tRNAs. Catalyzes cytosine C(5)-methylation of mRNAs, leading to stabilize them and prevent mRNA decay: mRNA stabilization involves YBX1 that specifically recognizes and binds m5C-modified transcripts. Cytosine C(5)-methylation of mRNAs also regulates mRNA export: methylated transcripts are specifically recognized by THOC4/ALYREF, which mediates mRNA nucleo-cytoplasmic shuttling. Also mediates cytosine C(5)-methylation of non-coding RNAs, such as vault RNAs (vtRNAs), promoting their processing into regulatory small RNAs. Cytosine C(5)-methylation of vtRNA VTRNA1.1 promotes its processing into small-vault RNA4 (svRNA4) and regulates epidermal differentiation. May act downstream of Myc to regulate epidermal cell growth and proliferation. Required for proper spindle assembly and chromosome segregation, independently of its methyltransferase activity. This chain is RNA cytosine C(5)-methyltransferase NSUN2, found in Homo sapiens (Human).